We begin with the raw amino-acid sequence, 80 residues long: Protein FAM229B (80 aa).

A disordered region spans residues 1–44 (MPFRFGTQPRRFPVEGGDSSIGLEPGLSSSAACNGKEMSPTRQL).

Belongs to the FAM229 family.

This Macaca fascicularis (Crab-eating macaque) protein is Protein FAM229B (FAM229B).